The following is a 37-amino-acid chain: Large ribosomal subunit protein bL36 (37 aa).

This sequence belongs to the bacterial ribosomal protein bL36 family.

The sequence is that of Large ribosomal subunit protein bL36 from Methylibium petroleiphilum (strain ATCC BAA-1232 / LMG 22953 / PM1).